The primary structure comprises 60 residues: Large ribosomal subunit protein bL32 (60 aa).

The segment at 1 to 60 (MAVQQNKKSPSKRGMHRSHNALTVPGIAVESTTGETHLRHHISPTGFYRGRKVLKTKSEA) is disordered. Basic residues-rich tracts occupy residues 9 to 19 (SPSKRGMHRSH) and 49 to 60 (RGRKVLKTKSEA).

Belongs to the bacterial ribosomal protein bL32 family.

This is Large ribosomal subunit protein bL32 from Polaromonas sp. (strain JS666 / ATCC BAA-500).